A 256-amino-acid polypeptide reads, in one-letter code: Acetyl-coenzyme A carboxylase carboxyl transferase subunit alpha (256 aa).

A CoA carboxyltransferase C-terminal domain is found at 1-236; sequence MSDVARILKE…KTAIVDELAE (236 aa).

This sequence belongs to the AccA family. Acetyl-CoA carboxylase is a heterohexamer composed of biotin carboxyl carrier protein (AccB), biotin carboxylase (AccC) and two subunits each of ACCase subunit alpha (AccA) and ACCase subunit beta (AccD).

The protein resides in the cytoplasm. The enzyme catalyses N(6)-carboxybiotinyl-L-lysyl-[protein] + acetyl-CoA = N(6)-biotinyl-L-lysyl-[protein] + malonyl-CoA. Its pathway is lipid metabolism; malonyl-CoA biosynthesis; malonyl-CoA from acetyl-CoA: step 1/1. Component of the acetyl coenzyme A carboxylase (ACC) complex. First, biotin carboxylase catalyzes the carboxylation of biotin on its carrier protein (BCCP) and then the CO(2) group is transferred by the carboxyltransferase to acetyl-CoA to form malonyl-CoA. The sequence is that of Acetyl-coenzyme A carboxylase carboxyl transferase subunit alpha from Streptococcus thermophilus (strain ATCC BAA-250 / LMG 18311).